A 31-amino-acid chain; its full sequence is 23S rRNA methylase leader peptide (31 aa).

Functionally, this peptide is involved in the control mechanism of the synthesis of the erythromycin resistance protein. The polypeptide is 23S rRNA methylase leader peptide (ermC) (Escherichia coli).